Reading from the N-terminus, the 593-residue chain is Progranulin (593 aa).

Positions 1-17 (MWTLVSWVALTAGLVAG) are cleaved as a signal peptide. An N-linked (GlcNAc...) asparagine glycan is attached at Asn-118. Disulfide bonds link Cys-126–Cys-139 and Cys-133–Cys-149. N-linked (GlcNAc...) asparagine glycosylation is found at Asn-236 and Asn-265. Disulfide bonds link Cys-284–Cys-296, Cys-290–Cys-306, Cys-297–Cys-314, Cys-307–Cys-321, Cys-315–Cys-328, Cys-322–Cys-335, Cys-366–Cys-378, Cys-372–Cys-388, Cys-397–Cys-410, and Cys-404–Cys-416. A glycan (N-linked (GlcNAc...) asparagine) is linked at Asn-368. Asn-530 carries an N-linked (GlcNAc...) asparagine glycan.

The protein belongs to the granulin family. In terms of assembly, progranulin is secreted as a homodimer. Interacts with SLPI; interaction protects progranulin from proteolysis. Interacts (via region corresponding to granulin-7 peptide) with CTSD; stabilizes CTSD and increases its proteolytic activity. Interacts (via region corresponding to granulin-7 peptide) with SORT1; this interaction mediates endocytosis and lysosome delivery of progranulin; interaction occurs at the neuronal cell surface in a stressed nervous system. Interacts with PSAP; facilitates lysosomal delivery of progranulin from the extracellular space and the biosynthetic pathway. Forms a complex with PSAP and M6PR; PSAP bridges the binding between progranulin and M6PR. Forms a complex with PSAP and SORT1; progranulin bridges the interaction between PSAP and SORT1; facilitates lysosomal targeting of PSAP via SORT1; interaction enhances PSAP uptake in primary cortical neurons. Interacts (via regions corresponding to granulin-2 and granulin-7 peptides) with GBA1; this interaction prevents aggregation of GBA1-SCARB2 complex via interaction with HSPA1A upon stress. Interacts (via region corresponding to granulin-7 peptide) with HSPA1A; mediates recruitment of HSPA1A to GBA1 and prevents GBA1 aggregation in response to stress. Post-translationally, cleaved by ELANE; proteolysis is blocked by SLPI and is concentration- and time-dependent and induces CXCL8/IL-8 production; granulin-3 and granulin-4 are resistant to ELANE. Cleaved by CTSL in lysosome thus regulating the maturation and turnover of progranulin within the lysosome. As to expression, in myelogenous leukemic cell lines of promonocytic, promyelocytic, and proerythroid lineage, in fibroblasts, and very strongly in epithelial cell lines. Present in inflammatory cells and bone marrow. Highest levels in kidney.

Its subcellular location is the secreted. It localises to the lysosome. In terms of biological role, secreted protein that acts as a key regulator of lysosomal function and as a growth factor involved in inflammation, wound healing and cell proliferation. Regulates protein trafficking to lysosomes, and also the activity of lysosomal enzymes. Also facilitates the acidification of lysosomes, causing degradation of mature CTSD by CTSB. In addition, functions as a wound-related growth factor that acts directly on dermal fibroblasts and endothelial cells to promote division, migration and the formation of capillary-like tubule structures. Also promotes epithelial cell proliferation by blocking TNF-mediated neutrophil activation preventing release of oxidants and proteases. Moreover, modulates inflammation in neurons by preserving neurons survival, axonal outgrowth and neuronal integrity. Functionally, promotes proliferation of the epithelial cell line A431 in culture. Its function is as follows. Inhibits epithelial cell proliferation and induces epithelial cells to secrete IL-8. Stabilizes CTSD through interaction with CTSD leading to maintain its aspartic-type peptidase activity. The protein is Progranulin of Homo sapiens (Human).